An 83-amino-acid chain; its full sequence is UPF0270 protein CGSHiEE_07180 (83 aa).

It belongs to the UPF0270 family.

This chain is UPF0270 protein CGSHiEE_07180, found in Haemophilus influenzae (strain PittEE).